The sequence spans 429 residues: Isocitrate dehydrogenase [NADP] (429 aa).

Thr-108 is a binding site for NADP(+). D-threo-isocitrate contacts are provided by Ser-117, Asn-119, Arg-123, Arg-133, and Arg-156. Asp-308 serves as a coordination point for Mg(2+). Residues 340-346, Asn-353, Tyr-393, and Arg-397 contribute to the NADP(+) site; that span reads HGSAPKY.

It belongs to the isocitrate and isopropylmalate dehydrogenases family. Homodimer. Mg(2+) serves as cofactor. Mn(2+) is required as a cofactor.

The enzyme catalyses D-threo-isocitrate + NADP(+) = 2-oxoglutarate + CO2 + NADPH. In terms of biological role, catalyzes the oxidative decarboxylation of isocitrate to 2-oxoglutarate and carbon dioxide with the concomitant reduction of NADP(+). The polypeptide is Isocitrate dehydrogenase [NADP] (icd) (Caldococcus noboribetus).